Consider the following 633-residue polypeptide: Chaperone protein HtpG (633 aa).

The interval 1–341 (MTAPHETMSF…SADLPLNVSR (341 aa)) is a; substrate-binding. The interval 342–562 (ELLQESRDVK…DGDMSGYLQR (221 aa)) is b. A c region spans residues 563-633 (LLKQAGQKAP…YVQRVNRLLA (71 aa)).

Belongs to the heat shock protein 90 family. In terms of assembly, homodimer.

It is found in the cytoplasm. In terms of biological role, molecular chaperone. Has ATPase activity. The protein is Chaperone protein HtpG of Cupriavidus metallidurans (strain ATCC 43123 / DSM 2839 / NBRC 102507 / CH34) (Ralstonia metallidurans).